Consider the following 599-residue polypeptide: 1-deoxy-D-xylulose-5-phosphate synthase (599 aa).

Residues His63 and 104-106 (GHS) contribute to the thiamine diphosphate site. Asp135 serves as a coordination point for Mg(2+). Residues 136–137 (GA), Asn164, Tyr271, and Glu352 contribute to the thiamine diphosphate site. Asn164 contacts Mg(2+).

The protein belongs to the transketolase family. DXPS subfamily. As to quaternary structure, homodimer. It depends on Mg(2+) as a cofactor. Thiamine diphosphate is required as a cofactor.

The enzyme catalyses D-glyceraldehyde 3-phosphate + pyruvate + H(+) = 1-deoxy-D-xylulose 5-phosphate + CO2. The protein operates within metabolic intermediate biosynthesis; 1-deoxy-D-xylulose 5-phosphate biosynthesis; 1-deoxy-D-xylulose 5-phosphate from D-glyceraldehyde 3-phosphate and pyruvate: step 1/1. Its function is as follows. Catalyzes the acyloin condensation reaction between C atoms 2 and 3 of pyruvate and glyceraldehyde 3-phosphate to yield 1-deoxy-D-xylulose-5-phosphate (DXP). This Nitratiruptor sp. (strain SB155-2) protein is 1-deoxy-D-xylulose-5-phosphate synthase.